Reading from the N-terminus, the 887-residue chain is Beta-galactosidase 9 (887 aa).

An N-terminal signal peptide occupies residues 1–30 (MAESIRTFSLQWRILSLIIALLVYFPILSG). Residue Asn37 is glycosylated (N-linked (GlcNAc...) asparagine). Glu194 serves as the catalytic Proton donor. Residue Glu263 is the Nucleophile of the active site. N-linked (GlcNAc...) asparagine glycans are attached at residues Asn463, Asn485, Asn496, Asn527, and Asn785. One can recognise an SUEL-type lectin domain in the interval 791–877 (NSVAPEVHLH…KTLAVMSRCS (87 aa)). The N-linked (GlcNAc...) asparagine glycan is linked to Asn881.

It belongs to the glycosyl hydrolase 35 family. As to expression, ubiquitous, with higher expression levels in siliques.

It localises to the secreted. It is found in the extracellular space. The protein resides in the apoplast. It catalyses the reaction Hydrolysis of terminal non-reducing beta-D-galactose residues in beta-D-galactosides.. In Arabidopsis thaliana (Mouse-ear cress), this protein is Beta-galactosidase 9 (BGAL9).